A 37-amino-acid polypeptide reads, in one-letter code: Large ribosomal subunit protein bL36c (37 aa).

The protein belongs to the bacterial ribosomal protein bL36 family.

It is found in the plastid. It localises to the chloroplast. The polypeptide is Large ribosomal subunit protein bL36c (Lotus japonicus (Lotus corniculatus var. japonicus)).